We begin with the raw amino-acid sequence, 140 residues long: Protein ripply1 (140 aa).

Residues 28–31 (WRPW) carry the WRPW motif; required for gro2-binding motif. A ripply homology domain region spans residues 71–106 (HPVRLYWPRSKSFDYLFSDGEALLRNFPVQATINFY). A disordered region spans residues 107-126 (DESDSEDEEESCDEDDESDV).

The protein belongs to the ripply family. As to quaternary structure, interacts with gro2 via the WRPW motif. As to expression, expressed in the embryonic anterior presomitic mesoderm and in newly formed somites.

It localises to the nucleus. Functionally, plays a role in somitogenesis. Essential for transcriptional repression of the segmental patterning genes, thus terminating the segmentation program in the presomitic mesoderm, and also required for the maintenance of rostrocaudal polarity in somites. The sequence is that of Protein ripply1 from Danio rerio (Zebrafish).